A 90-amino-acid polypeptide reads, in one-letter code: Putative cytochrome c oxidase subunit 5b-like (90 aa).

Positions 43, 67, and 70 each coordinate Zn(2+).

This sequence belongs to the cytochrome c oxidase subunit 5B (TC 3.D.4.11) family.

The sequence is that of Putative cytochrome c oxidase subunit 5b-like from Arabidopsis thaliana (Mouse-ear cress).